We begin with the raw amino-acid sequence, 705 residues long: Translation initiation factor IF-2 (705 aa).

The disordered stretch occupies residues D40 to S124. Basic and acidic residues predominate over residues D41–N58. Over residues K59 to G77 the composition is skewed to low complexity. Positions K94–K108 are enriched in basic residues. Residues E207–K376 form the tr-type G domain. The segment at G216–T223 is G1. G216–T223 lines the GTP pocket. Residues G241–H245 form a G2 region. Residues D262–G265 are G3. GTP contacts are provided by residues D262–H266 and N316–D319. The tract at residues N316 to D319 is G4. Residues S352–L354 are G5.

The protein belongs to the TRAFAC class translation factor GTPase superfamily. Classic translation factor GTPase family. IF-2 subfamily.

The protein localises to the cytoplasm. One of the essential components for the initiation of protein synthesis. Protects formylmethionyl-tRNA from spontaneous hydrolysis and promotes its binding to the 30S ribosomal subunits. Also involved in the hydrolysis of GTP during the formation of the 70S ribosomal complex. The sequence is that of Translation initiation factor IF-2 from Staphylococcus aureus (strain MRSA252).